A 288-amino-acid chain; its full sequence is Thymidylate synthase (288 aa).

DUMP is bound by residues arginine 21 and 150–151; that span reads RR. Cysteine 170 (nucleophile) is an active-site residue. DUMP-binding positions include 191-194, asparagine 202, and 232-234; these read RSGD and HIY. Aspartate 194 is a (6R)-5,10-methylene-5,6,7,8-tetrahydrofolate binding site. Residue alanine 287 coordinates (6R)-5,10-methylene-5,6,7,8-tetrahydrofolate.

Belongs to the thymidylate synthase family. Bacterial-type ThyA subfamily. In terms of assembly, homodimer.

It is found in the cytoplasm. It carries out the reaction dUMP + (6R)-5,10-methylene-5,6,7,8-tetrahydrofolate = 7,8-dihydrofolate + dTMP. The protein operates within pyrimidine metabolism; dTTP biosynthesis. In terms of biological role, catalyzes the reductive methylation of 2'-deoxyuridine-5'-monophosphate (dUMP) to 2'-deoxythymidine-5'-monophosphate (dTMP) while utilizing 5,10-methylenetetrahydrofolate (mTHF) as the methyl donor and reductant in the reaction, yielding dihydrofolate (DHF) as a by-product. This enzymatic reaction provides an intracellular de novo source of dTMP, an essential precursor for DNA biosynthesis. This is Thymidylate synthase from Mesoplasma florum (strain ATCC 33453 / NBRC 100688 / NCTC 11704 / L1) (Acholeplasma florum).